A 188-amino-acid chain; its full sequence is dCTP deaminase, dUMP-forming (188 aa).

Residues 101 to 106 (KSSLGR), aspartate 119, 127 to 129 (TLE), glutamine 148, tyrosine 162, and glutamine 174 contribute to the dCTP site. Residue glutamate 129 is the Proton donor/acceptor of the active site.

It belongs to the dCTP deaminase family. As to quaternary structure, homotrimer.

The enzyme catalyses dCTP + 2 H2O = dUMP + NH4(+) + diphosphate. The protein operates within pyrimidine metabolism; dUMP biosynthesis; dUMP from dCTP: step 1/1. In terms of biological role, bifunctional enzyme that catalyzes both the deamination of dCTP to dUTP and the hydrolysis of dUTP to dUMP without releasing the toxic dUTP intermediate. The sequence is that of dCTP deaminase, dUMP-forming from Corynebacterium jeikeium (strain K411).